Consider the following 1377-residue polypeptide: Dicer-like protein 2 (1377 aa).

In terms of domain architecture, Helicase ATP-binding spans 23–203; sequence MFEASLKENI…MKTLESNLDS (181 aa). 36–43 contacts ATP; the sequence is MDTGTGKT. Positions 144 to 147 match the DEAH box motif; that stretch reads DEAH. In terms of domain architecture, Helicase C-terminal spans 368 to 531; the sequence is ALINFLDKFD…AYQDEERRLR (164 aa). The Dicer dsRNA-binding fold domain maps to 561 to 655; it reads VVTHLYHFCA…LPLTKNPEMR (95 aa). RNase III domains lie at 914–1052 and 1092–1275; these read RLCA…LDGG and DGDL…VDSG. 3 residues coordinate Mg(2+): glutamate 1131, aspartate 1261, and glutamate 1264.

Belongs to the helicase family. Dicer subfamily. Requires Mg(2+) as cofactor. Mn(2+) serves as cofactor.

Its function is as follows. Dicer-like endonuclease involved in cleaving double-stranded RNA in the RNA interference (RNAi) pathway. Produces 21 to 25 bp dsRNAs (siRNAs) which target the selective destruction of homologous RNAs leading to sequence-specific suppression of gene expression, called post-transcriptional gene silencing (PTGS). Part of a broad host defense response against viral infection and transposons. This is Dicer-like protein 2 (dcl2) from Aspergillus oryzae (strain ATCC 42149 / RIB 40) (Yellow koji mold).